A 317-amino-acid polypeptide reads, in one-letter code: Tumor-associated calcium signal transducer 2 (317 aa).

Positions 1–24 are cleaved as a signal peptide; sequence MARGLDLAPLLLLLLAMATRFCTA. The Extracellular segment spans residues 25 to 270; it reads QSNCTCPTNK…QFSMKRLTAG (246 aa). N-linked (GlcNAc...) asparagine glycosylation is present at Asn-27. Residues 64–139 enclose the Thyroglobulin type-1 domain; the sequence is TSKCLLLKAR…TDKGDQSLRC (76 aa). Cystine bridges form between Cys-67–Cys-102, Cys-113–Cys-119, and Cys-121–Cys-139. N-linked (GlcNAc...) asparagine glycosylation occurs at Asn-114. N-linked (GlcNAc...) asparagine glycosylation is found at Asn-162 and Asn-202. The helical transmembrane segment at 271–291 threads the bilayer; the sequence is VIAVIAVVSVAVVAGVVVLVV. Over 292–317 the chain is Cytoplasmic; that stretch reads TKRRKSGKYKKVELKELGEMRSEPSL.

Belongs to the EPCAM family. Expressed in kidney, lung, ovary and testis. High levels of expression in immortalized keratinocytes.

Its subcellular location is the membrane. In terms of biological role, may function as a growth factor receptor. This Mus musculus (Mouse) protein is Tumor-associated calcium signal transducer 2 (Tacstd2).